Consider the following 97-residue polypeptide: Co-chaperonin GroES (97 aa).

It belongs to the GroES chaperonin family. As to quaternary structure, heptamer of 7 subunits arranged in a ring. Interacts with the chaperonin GroEL.

It is found in the cytoplasm. Functionally, together with the chaperonin GroEL, plays an essential role in assisting protein folding. The GroEL-GroES system forms a nano-cage that allows encapsulation of the non-native substrate proteins and provides a physical environment optimized to promote and accelerate protein folding. GroES binds to the apical surface of the GroEL ring, thereby capping the opening of the GroEL channel. The sequence is that of Co-chaperonin GroES from Buchnera aphidicola subsp. Baizongia pistaciae (strain Bp).